We begin with the raw amino-acid sequence, 344 residues long: Phenylalanine--tRNA ligase alpha subunit (344 aa).

Mg(2+) is bound at residue Glu255.

This sequence belongs to the class-II aminoacyl-tRNA synthetase family. Phe-tRNA synthetase alpha subunit type 1 subfamily. In terms of assembly, tetramer of two alpha and two beta subunits. The cofactor is Mg(2+).

The protein localises to the cytoplasm. It catalyses the reaction tRNA(Phe) + L-phenylalanine + ATP = L-phenylalanyl-tRNA(Phe) + AMP + diphosphate + H(+). In Sulfurihydrogenibium sp. (strain YO3AOP1), this protein is Phenylalanine--tRNA ligase alpha subunit.